Consider the following 296-residue polypeptide: Protoheme IX farnesyltransferase (296 aa).

The next 8 helical transmembrane spans lie at 8–28 (VTKP…FFLA), 35–55 (WILM…GCAI), 84–104 (AAFF…SYFT), 107–127 (VAVA…TMYF), 132–152 (VYGT…GYCA), 162–182 (AILL…IAIF), 215–235 (FAVV…FMVV), and 264–284 (VFFF…LDFN).

It belongs to the UbiA prenyltransferase family. Protoheme IX farnesyltransferase subfamily.

The protein localises to the cell inner membrane. It carries out the reaction heme b + (2E,6E)-farnesyl diphosphate + H2O = Fe(II)-heme o + diphosphate. Its pathway is porphyrin-containing compound metabolism; heme O biosynthesis; heme O from protoheme: step 1/1. Functionally, converts heme B (protoheme IX) to heme O by substitution of the vinyl group on carbon 2 of heme B porphyrin ring with a hydroxyethyl farnesyl side group. The sequence is that of Protoheme IX farnesyltransferase from Marinomonas sp. (strain MWYL1).